The primary structure comprises 242 residues: MYRLAKIISNAGVCSRRNAEKLIVGGKVKIDGITILSPATNVDISNQIEVSGRLINNIQKPRLWIYYKPIGLITTHKDPLSRKTVFEQLIGLPRVISIGRLDLNSEGLLLLTNSGDLAHQFEMPSSKLKRVYNVRAYGNANFLLKNNYNNLKIDGIFYNPYSIKLLRQNKNNSWFEVVLFEGKNREIRRIFEYFGLKVNKLIRVQYGALKIGNLKPGDYKEISNKILKKIISNKLTNYIDNR.

One can recognise an S4 RNA-binding domain in the interval 2–69 (YRLAKIISNA…KPRLWIYYKP (68 aa)). The Nucleophile role is filled by aspartate 102.

The protein belongs to the pseudouridine synthase RsuA family.

It catalyses the reaction a uridine in RNA = a pseudouridine in RNA. This is an uncharacterized protein from Rickettsia typhi (strain ATCC VR-144 / Wilmington).